The sequence spans 364 residues: MLPANGQTAVIQSKTSSHGLPLVVAHGRPLPPLPTPYHVRVRVLAVGLNPTDYKMVTHFFMQDNTAGCDFCGIVEEAGPQSVLGLGLRVCGADFPYRPSNPYNGAFAEYATADSRHLLRIPDGVSDLQAAGIGAIGWGTAALAISDPAALDLPGLPSRPDSRGLPVLVYGGATATGIMAIQMLKLSGYSPIAVCSESSAPLCMSLGAIGTASYTSVTCAEDIKAIAKGSKIKHALDCITDVESMAICLASLSRTGGRYACLEAFPDAWLTRRAIAVKVVMGFEGQNVDVDLGHPVYTRKANPALHAVAGEWARELQLLLNDGQIKTQPMQEIGGSFEGVIKALEMLQRGDVKGKKLAIRIAYSK.

An NADP(+)-binding site is contributed by 51–54 (TDYK). A substrate-binding site is contributed by 137-144 (WGTAALAI). Residues 172–175 (ATAT), 195–198 (SESS), Y213, and 261–262 (LE) contribute to the NADP(+) site. Position 281–285 (281–285 (GFEGQ)) interacts with substrate. Position 351–352 (351–352 (VK)) interacts with NADP(+).

It belongs to the zinc-containing alcohol dehydrogenase family. Monomer.

The catalysed reaction is 7 malonyl-CoA + acetyl-CoA + 10 AH2 + 5 S-adenosyl-L-methionine + 2 H(+) = dehydroprobetaenone I + 10 A + 5 S-adenosyl-L-homocysteine + 7 CO2 + 8 CoA + 6 H2O. It functions in the pathway mycotoxin biosynthesis. Functionally, trans-enoyl reductase; part of the gene cluster that mediates the biosynthesis of the phytotoxin stemphyloxin II. The first step of the pathway is the synthesis of dehydroprobetaenone I by the polyketide synthase sthA and the enoyl reductase sthE via condensation of one acetyl-CoA starter unit with 7 malonyl-CoA units and 5 methylations. The C-terminal reductase (R) domain of sthA catalyzes the reductive release of the polyketide chain. Because sthA lacks a designated enoylreductase (ER) domain, the required activity is provided the enoyl reductase sthE. The short-chain dehydrogenase/reductase sthC then catalyzes reduction of dehydroprobetaenone I to probetaenone I. The cytochrome P450 monooxygenase sthF catalyzes successive epoxidation, oxidation (resulting from epoxide opening) and hydroxylation to install a tertiary alcohol in the decaline ring to yield betaenone C from dehydroprobetaenone I and betaenone B from probetaenone I. The FAD-linked oxidoreductase sthB is responsible for the conversion of betaenone C to betaenone A via an intramolecular aldol reaction between C-1 and C-17 to form the bridged tricyclic system in betaenone A. Finally, the cytochrome P450 monooxygenase sthD catalyzes the hydroxylation of C-15 to afford the final metabolite stemphyloxin II. In Phaeosphaeria nodorum (strain SN15 / ATCC MYA-4574 / FGSC 10173) (Glume blotch fungus), this protein is Trans-enoyl reductase sthE.